Here is a 171-residue protein sequence, read N- to C-terminus: Large ribosomal subunit protein bL17 (171 aa).

Positions 140–152 (KREIQTKAREEKR) are enriched in basic and acidic residues. The interval 140 to 171 (KREIQTKAREEKRATRKSNSAPVNKETTSKKK) is disordered. Residues 156–165 (KSNSAPVNKE) are compositionally biased toward polar residues.

This sequence belongs to the bacterial ribosomal protein bL17 family. Part of the 50S ribosomal subunit. Contacts protein L32.

The chain is Large ribosomal subunit protein bL17 from Leptospira interrogans serogroup Icterohaemorrhagiae serovar Lai (strain 56601).